The chain runs to 103 residues: Flagellar hook-basal body complex protein FliE (103 aa).

The protein belongs to the FliE family.

The protein localises to the bacterial flagellum basal body. The sequence is that of Flagellar hook-basal body complex protein FliE from Erwinia tasmaniensis (strain DSM 17950 / CFBP 7177 / CIP 109463 / NCPPB 4357 / Et1/99).